The chain runs to 407 residues: Na(+)-translocating NADH-quinone reductase subunit F (407 aa).

A helical membrane pass occupies residues 3 to 23 (IILGVVMFTLIVLALTVMILF). The 2Fe-2S ferredoxin-type domain occupies 32–126 (GDITVEINED…NLKIELPEEI (95 aa)). [2Fe-2S] cluster-binding residues include C69, C75, C78, and C110. The FAD-binding FR-type domain maps to 129–269 (VKKWTCEVIS…SGPFGEFFAK (141 aa)).

This sequence belongs to the NqrF family. Composed of six subunits; NqrA, NqrB, NqrC, NqrD, NqrE and NqrF. [2Fe-2S] cluster serves as cofactor. It depends on FAD as a cofactor.

Its subcellular location is the cell inner membrane. It catalyses the reaction a ubiquinone + n Na(+)(in) + NADH + H(+) = a ubiquinol + n Na(+)(out) + NAD(+). Functionally, NQR complex catalyzes the reduction of ubiquinone-1 to ubiquinol by two successive reactions, coupled with the transport of Na(+) ions from the cytoplasm to the periplasm. The first step is catalyzed by NqrF, which accepts electrons from NADH and reduces ubiquinone-1 to ubisemiquinone by a one-electron transfer pathway. The protein is Na(+)-translocating NADH-quinone reductase subunit F of Yersinia pseudotuberculosis serotype O:1b (strain IP 31758).